Here is a 162-residue protein sequence, read N- to C-terminus: Nucleotide-binding protein Anae109_0095 (162 aa).

This sequence belongs to the YajQ family.

Nucleotide-binding protein. The sequence is that of Nucleotide-binding protein Anae109_0095 from Anaeromyxobacter sp. (strain Fw109-5).